The following is a 93-amino-acid chain: Putative aspartate aminotransferase (93 aa).

It belongs to the class-I pyridoxal-phosphate-dependent aminotransferase family. Homodimer. The cofactor is pyridoxal 5'-phosphate.

It localises to the cytoplasm. The enzyme catalyses L-aspartate + 2-oxoglutarate = oxaloacetate + L-glutamate. The protein is Putative aspartate aminotransferase of Methylorubrum extorquens (Methylobacterium dichloromethanicum).